A 335-amino-acid chain; its full sequence is Adenosine deaminase (335 aa).

Residues His12 and His14 each coordinate Zn(2+). The substrate site is built by His14 and Asp16. His197 serves as a coordination point for Zn(2+). The active-site Proton donor is the Glu200. Asp278 lines the Zn(2+) pocket.

The protein belongs to the metallo-dependent hydrolases superfamily. Adenosine and AMP deaminases family. Adenosine deaminase subfamily. Zn(2+) serves as cofactor.

The enzyme catalyses adenosine + H2O + H(+) = inosine + NH4(+). It catalyses the reaction 2'-deoxyadenosine + H2O + H(+) = 2'-deoxyinosine + NH4(+). Its function is as follows. Catalyzes the hydrolytic deamination of adenosine and 2-deoxyadenosine. The chain is Adenosine deaminase from Clostridium botulinum (strain Okra / Type B1).